A 282-amino-acid chain; its full sequence is Biotin synthase (282 aa).

A Radical SAM core domain is found at methionine 1–arginine 230. Residues cysteine 19, cysteine 23, and cysteine 26 each contribute to the [4Fe-4S] cluster site. The [2Fe-2S] cluster site is built by cysteine 63, cysteine 98, and cysteine 156.

Belongs to the radical SAM superfamily. Biotin synthase family. As to quaternary structure, homodimer. [4Fe-4S] cluster serves as cofactor. Requires [2Fe-2S] cluster as cofactor.

It catalyses the reaction (4R,5S)-dethiobiotin + (sulfur carrier)-SH + 2 reduced [2Fe-2S]-[ferredoxin] + 2 S-adenosyl-L-methionine = (sulfur carrier)-H + biotin + 2 5'-deoxyadenosine + 2 L-methionine + 2 oxidized [2Fe-2S]-[ferredoxin]. The protein operates within cofactor biosynthesis; biotin biosynthesis; biotin from 7,8-diaminononanoate: step 2/2. In terms of biological role, catalyzes the conversion of dethiobiotin (DTB) to biotin by the insertion of a sulfur atom into dethiobiotin via a radical-based mechanism. The polypeptide is Biotin synthase (Aliarcobacter butzleri (strain RM4018) (Arcobacter butzleri)).